The chain runs to 1842 residues: Plexin-B2 (1842 aa).

A signal peptide spans 1–19 (MALPLWALTFLGLTGLGLS). The Sema domain occupies 20 to 468 (LRSRKPESFR…TQDKVFRLPV (449 aa)). Residues 20 to 1201 (LRSRKPESFR…EYDTRASDVP (1182 aa)) lie on the Extracellular side of the membrane. Disulfide bonds link Cys-78–Cys-87 and Cys-112–Cys-120. Asn-127 and Asn-242 each carry an N-linked (GlcNAc...) asparagine glycan. 3 disulfide bridges follow: Cys-250–Cys-366, Cys-266–Cys-313, and Cys-331–Cys-353. Residues Asn-393 and Asn-451 are each glycosylated (N-linked (GlcNAc...) asparagine). Intrachain disulfides connect Cys-471/Cys-488, Cys-477/Cys-520, Cys-480/Cys-497, Cys-491/Cys-503, and Cys-557/Cys-576. Asn-798 is a glycosylation site (N-linked (GlcNAc...) asparagine). 3 consecutive IPT/TIG domains span residues 806–895 (PVIT…QFTY), 898–982 (PQPL…SFTY), and 986–1095 (PMIR…VFEY). Asn-919, Asn-1053, and Asn-1072 each carry an N-linked (GlcNAc...) asparagine glycan. The chain crosses the membrane as a helical span at residues 1202–1222 (LSLILPLVMVPMVFIIVVSIY). The Cytoplasmic segment spans residues 1223-1842 (CYWRKSQQAE…AALENKVTDL (620 aa)). Residues Ser-1240, Ser-1248, and Ser-1574 each carry the phosphoserine modification.

This sequence belongs to the plexin family. In terms of assembly, monomer, and heterodimer with PLXNB1. Interacts with MET, ARHGEF11 and ARHGEF12. May also interact with MST1R. Detected in macrophages from spleen and bone marrow (at protein level). Detected in granule cells in the developing cerebellum, dentate gyrus and olfactory bulb. Expressed in neurons and glia in the developing hippocampus.

It localises to the cell membrane. Cell surface receptor for SEMA4C, SEMA4D and SEMA4G that plays an important role in cell-cell signaling. Plays a role in glutamatergic synapse development and is required for SEMA4A-mediated excitatory synapse development. Binding to class 4 semaphorins promotes downstream activation of RHOA and phosphorylation of ERBB2 at 'Tyr-1248'. Also acts as a cell surface receptor for angiogenin (ANG); promoting ANG endocytosis and translocation to the cytoplasm or nucleus. Required for normal differentiation and migration of neuronal cells during brain corticogenesis and for normal embryonic brain development. Regulates the migration of cerebellar granule cells in the developing brain. Plays a role in RHOA activation and subsequent changes of the actin cytoskeleton. Plays a role in axon guidance, invasive growth and cell migration. May modulate the activity of RAC1 and CDC42. Down-regulates macrophage migration in wound-healing assays (in vitro). The sequence is that of Plexin-B2 from Mus musculus (Mouse).